Here is a 131-residue protein sequence, read N- to C-terminus: Small ribosomal subunit protein uS8 (131 aa).

The protein belongs to the universal ribosomal protein uS8 family. In terms of assembly, part of the 30S ribosomal subunit. Contacts proteins S5 and S12.

One of the primary rRNA binding proteins, it binds directly to 16S rRNA central domain where it helps coordinate assembly of the platform of the 30S subunit. The polypeptide is Small ribosomal subunit protein uS8 (Hyphomonas neptunium (strain ATCC 15444)).